Consider the following 337-residue polypeptide: Beta-glucosidase-like protein NCA3, mitochondrial (337 aa).

Positions 57–67 (ESAATTTTLSS) are enriched in low complexity. The interval 57-84 (ESAATTTTLSSSEKDTSEQKRDGGFQDG) is disordered. Over residues 68 to 80 (SEKDTSEQKRDGG) the composition is skewed to basic and acidic residues.

This sequence belongs to the SUN family.

It is found in the mitochondrion. Its function is as follows. Involved in the mitochondrial expression of subunits 6 and 8 of the F0-F1 ATP synthase. The protein is Beta-glucosidase-like protein NCA3, mitochondrial (NCA3) of Saccharomyces cerevisiae (strain ATCC 204508 / S288c) (Baker's yeast).